The sequence spans 97 residues: Small ribosomal subunit protein bS20 (97 aa).

Belongs to the bacterial ribosomal protein bS20 family.

In terms of biological role, binds directly to 16S ribosomal RNA. This is Small ribosomal subunit protein bS20 from Gloeothece citriformis (strain PCC 7424) (Cyanothece sp. (strain PCC 7424)).